We begin with the raw amino-acid sequence, 127 residues long: Photosystem II reaction center Psb28 protein (127 aa).

Positions G107 to A127 are disordered. Residues G109–Q118 are compositionally biased toward polar residues.

Belongs to the Psb28 family. Part of the photosystem II complex.

Its subcellular location is the cellular thylakoid membrane. This chain is Photosystem II reaction center Psb28 protein, found in Parasynechococcus marenigrum (strain WH8102).